We begin with the raw amino-acid sequence, 118 residues long: uncharacterized protein (118 aa).

A run of 3 helical transmembrane segments spans residues 20-39 (VEGP…LLWI), 46-63 (LVVV…GEAV), and 67-85 (LSLV…AMSG). The tract at residues 85-118 (GDKSKKKGKKQRSILKDADDWDDDSWDDEGDWDE) is disordered. Positions 88–97 (SKKKGKKQRS) are enriched in basic residues. Residues 103-118 (DDWDDDSWDDEGDWDE) are compositionally biased toward acidic residues.

The protein localises to the cell membrane. This is an uncharacterized protein from Archaeoglobus fulgidus (strain ATCC 49558 / DSM 4304 / JCM 9628 / NBRC 100126 / VC-16).